The chain runs to 350 residues: GTPase Obg (350 aa).

Residues 1-159 (MKLVDEAEIE…RTLKLELKLL (159 aa)) form the Obg domain. The segment at 127 to 147 (NMHFKSSTNRSPRQALPGEPG) is disordered. An OBG-type G domain is found at 160 to 337 (ADVGLLGFPN…IMSRIMAFFD (178 aa)). GTP-binding positions include 166-173 (GFPNAGKS), 191-195 (FTTLY), 213-216 (DIPG), 287-290 (NKAD), and 318-320 (SAL). The Mg(2+) site is built by Ser173 and Thr193.

The protein belongs to the TRAFAC class OBG-HflX-like GTPase superfamily. OBG GTPase family. As to quaternary structure, monomer. It depends on Mg(2+) as a cofactor.

It localises to the cytoplasm. Its function is as follows. An essential GTPase which binds GTP, GDP and possibly (p)ppGpp with moderate affinity, with high nucleotide exchange rates and a fairly low GTP hydrolysis rate. Plays a role in control of the cell cycle, stress response, ribosome biogenesis and in those bacteria that undergo differentiation, in morphogenesis control. The protein is GTPase Obg of Stenotrophomonas maltophilia (strain R551-3).